The following is a 415-amino-acid chain: Phosphoribosylamine--glycine ligase (415 aa).

The 204-residue stretch at 108-311 (KKIMKKYNIP…LMQHIIDLDE (204 aa)) folds into the ATP-grasp domain. Residue 134-191 (IENCELPVVVKKDGLAAGKGVIIADTIEAARSAIEIMYGDEEEGTVVFETFLEGEEFS) coordinates ATP. Mg(2+)-binding residues include glutamate 281 and asparagine 283.

This sequence belongs to the GARS family. The cofactor is Mg(2+). It depends on Mn(2+) as a cofactor.

The catalysed reaction is 5-phospho-beta-D-ribosylamine + glycine + ATP = N(1)-(5-phospho-beta-D-ribosyl)glycinamide + ADP + phosphate + H(+). It participates in purine metabolism; IMP biosynthesis via de novo pathway; N(1)-(5-phospho-D-ribosyl)glycinamide from 5-phospho-alpha-D-ribose 1-diphosphate: step 2/2. The chain is Phosphoribosylamine--glycine ligase from Staphylococcus aureus (strain Mu50 / ATCC 700699).